The primary structure comprises 342 residues: tRNA N6-adenosine threonylcarbamoyltransferase (342 aa).

Fe cation-binding residues include His114 and His118. Residues 136 to 140, Asp169, Gly182, Asp186, and Asn275 contribute to the substrate site; that span reads LVSGG. Asp301 contacts Fe cation.

It belongs to the KAE1 / TsaD family. The cofactor is Fe(2+).

The protein localises to the cytoplasm. It carries out the reaction L-threonylcarbamoyladenylate + adenosine(37) in tRNA = N(6)-L-threonylcarbamoyladenosine(37) in tRNA + AMP + H(+). Functionally, required for the formation of a threonylcarbamoyl group on adenosine at position 37 (t(6)A37) in tRNAs that read codons beginning with adenine. Is involved in the transfer of the threonylcarbamoyl moiety of threonylcarbamoyl-AMP (TC-AMP) to the N6 group of A37, together with TsaE and TsaB. TsaD likely plays a direct catalytic role in this reaction. The polypeptide is tRNA N6-adenosine threonylcarbamoyltransferase (Streptococcus pyogenes serotype M3 (strain ATCC BAA-595 / MGAS315)).